The following is a 499-amino-acid chain: Aspartyl/glutamyl-tRNA(Asn/Gln) amidotransferase subunit B (499 aa).

The protein belongs to the GatB/GatE family. GatB subfamily. Heterotrimer of A, B and C subunits.

The catalysed reaction is L-glutamyl-tRNA(Gln) + L-glutamine + ATP + H2O = L-glutaminyl-tRNA(Gln) + L-glutamate + ADP + phosphate + H(+). It catalyses the reaction L-aspartyl-tRNA(Asn) + L-glutamine + ATP + H2O = L-asparaginyl-tRNA(Asn) + L-glutamate + ADP + phosphate + 2 H(+). Functionally, allows the formation of correctly charged Asn-tRNA(Asn) or Gln-tRNA(Gln) through the transamidation of misacylated Asp-tRNA(Asn) or Glu-tRNA(Gln) in organisms which lack either or both of asparaginyl-tRNA or glutaminyl-tRNA synthetases. The reaction takes place in the presence of glutamine and ATP through an activated phospho-Asp-tRNA(Asn) or phospho-Glu-tRNA(Gln). The chain is Aspartyl/glutamyl-tRNA(Asn/Gln) amidotransferase subunit B from Bartonella quintana (strain Toulouse) (Rochalimaea quintana).